The sequence spans 608 residues: MSLAPGTETDLQNRFRSHFCGRLNTEYENKQVRLAGWIHRKRDHGGLIFIDLRDHTGIAQLIIQPEKQELFQKVERLHVESVIAVQGTVVKRSEETLNSRIPSGAIEVLVDDVQVESHAVALPFPVADELQTSEELRLTYRFLDLRREKIHQNIVFRSQLISKVRRYLEDHGFMEIQTPILTASSPEGARDFLVPSRLHPGKFYALPQAPQQFKQLLMVSGFPRYFQIAPCFRDEDARADRSPGEFYQVDMEMAFIEQDDLFEILEGMLRYLTETMSTKRITQFPFPRLSYRDVMNRFGSDKPDLRVPLEMQDVTELFVGSSFKVFASNTKEGSCIKAMVLKGRGTESRQFYDKAEKRARELGAPGLAYVQYREEGPKGPIVKFLSEAELSALQERLAIETGDVVFFGAGKWEKTCKIMGGIREYFSDLFELDRDELSFCWIVDFPLYEFDEKESRIDFSHNPFSMPQGEMDALDTMNPLDILAYQYDIVCNGIELSSGAIRNHRPDIMYRAFEIAGYSKEEVDKRFGHMIEAFKMGAPPHGGIAPGLDRLVMILRDEHNIREVIAFPMNQQAQDLMMSAPSDVSRLQLRELHLKLDLPVETAEQEPG.

Residue E187 participates in L-aspartate binding. An aspartate region spans residues 211 to 214 (QQFK). L-aspartate contacts are provided by R233 and H461. 233–235 (RDE) contacts ATP. An ATP-binding site is contributed by E495. R502 provides a ligand contact to L-aspartate. 547-550 (GLDR) contacts ATP.

It belongs to the class-II aminoacyl-tRNA synthetase family. Type 1 subfamily. As to quaternary structure, homodimer.

It is found in the cytoplasm. The catalysed reaction is tRNA(Asx) + L-aspartate + ATP = L-aspartyl-tRNA(Asx) + AMP + diphosphate. Functionally, aspartyl-tRNA synthetase with relaxed tRNA specificity since it is able to aspartylate not only its cognate tRNA(Asp) but also tRNA(Asn). Reaction proceeds in two steps: L-aspartate is first activated by ATP to form Asp-AMP and then transferred to the acceptor end of tRNA(Asp/Asn). This Prosthecochloris aestuarii (strain DSM 271 / SK 413) protein is Aspartate--tRNA(Asp/Asn) ligase.